The chain runs to 241 residues: Glutathione S-transferase omega-1 (241 aa).

The residue at position 2 (Ser-2) is an N-acetylserine. Residues 22 to 101 (GQIRVYSMRF…YLDEAYPEKK (80 aa)) enclose the GST N-terminal domain. Catalysis depends on Cys-32, which acts as the Nucleophile. Lys-57 bears the N6-acetyllysine mark. Glutathione-binding positions include Lys-59, Val-72, and 85 to 86 (ES). Positions 106–228 (DPYEKACQKM…AKTYRDYLSL (123 aa)) constitute a GST C-terminal domain. Ser-129 is modified (phosphoserine). N6-acetyllysine occurs at positions 143, 148, and 152.

This sequence belongs to the GST superfamily. Omega family. Homodimer.

The protein resides in the cytoplasm. The protein localises to the cytosol. It carries out the reaction RX + glutathione = an S-substituted glutathione + a halide anion + H(+). The enzyme catalyses L-dehydroascorbate + 2 glutathione = glutathione disulfide + L-ascorbate. It catalyses the reaction methylarsonate + 2 glutathione + H(+) = methylarsonous acid + glutathione disulfide + H2O. Functionally, exhibits glutathione-dependent thiol transferase and dehydroascorbate reductase activities. Has S-(phenacyl)glutathione reductase activity. Also has glutathione S-transferase activity. Participates in the biotransformation of inorganic arsenic and reduces monomethylarsonic acid (MMA) and dimethylarsonic acid. The polypeptide is Glutathione S-transferase omega-1 (Gsto1) (Rattus norvegicus (Rat)).